We begin with the raw amino-acid sequence, 461 residues long: F-box protein At3g62230 (461 aa).

Residues Val-7–Asp-55 enclose the F-box domain.

As to quaternary structure, part of a SCF (ASK-cullin-F-box) protein ligase complex. Interacts with ASK4.

Its subcellular location is the nucleus. Its pathway is protein modification; protein ubiquitination. Functionally, component of SCF(ASK-cullin-F-box) E3 ubiquitin ligase complexes, which may mediate the ubiquitination and subsequent proteasomal degradation of target proteins. The polypeptide is F-box protein At3g62230 (Arabidopsis thaliana (Mouse-ear cress)).